Consider the following 63-residue polypeptide: Potassium channel toxin MeuTXKalpha4 (63 aa).

Positions 1 to 28 (MSRLLIFILTAVVLSVIIDILNNSKVEG) are cleaved as a signal peptide. Disulfide bonds link C35-C53, C39-C59, and C43-C61.

It belongs to the short scorpion toxin superfamily. Potassium channel inhibitor family. In terms of tissue distribution, expressed by the venom gland.

Its subcellular location is the secreted. In terms of biological role, may block voltage-gated potassium channels (Kv). The polypeptide is Potassium channel toxin MeuTXKalpha4 (Mesobuthus eupeus (Lesser Asian scorpion)).